We begin with the raw amino-acid sequence, 155 residues long: Small ribosomal subunit protein uS7 (155 aa).

This sequence belongs to the universal ribosomal protein uS7 family. In terms of assembly, part of the 30S ribosomal subunit. Contacts proteins S9 and S11.

Its function is as follows. One of the primary rRNA binding proteins, it binds directly to 16S rRNA where it nucleates assembly of the head domain of the 30S subunit. Is located at the subunit interface close to the decoding center, probably blocks exit of the E-site tRNA. This Ureaplasma parvum serovar 3 (strain ATCC 27815 / 27 / NCTC 11736) protein is Small ribosomal subunit protein uS7.